The primary structure comprises 199 residues: Protein-methionine-sulfoxide reductase heme-binding subunit MsrQ (199 aa).

A run of 4 helical transmembrane segments spans residues Trp10 to Ile30, Leu82 to Ile102, Pro116 to Thr136, and Val153 to Ser173.

This sequence belongs to the MsrQ family. As to quaternary structure, heterodimer of a catalytic subunit (MsrP) and a heme-binding subunit (MsrQ). It depends on FMN as a cofactor. Heme b is required as a cofactor.

It localises to the cell inner membrane. Part of the MsrPQ system that repairs oxidized periplasmic proteins containing methionine sulfoxide residues (Met-O), using respiratory chain electrons. Thus protects these proteins from oxidative-stress damage caused by reactive species of oxygen and chlorine generated by the host defense mechanisms. MsrPQ is essential for the maintenance of envelope integrity under bleach stress, rescuing a wide series of structurally unrelated periplasmic proteins from methionine oxidation, including the primary periplasmic chaperone SurA and the lipoprotein Pal. MsrQ provides electrons for reduction to the reductase catalytic subunit MsrP, using the quinone pool of the respiratory chain. This is Protein-methionine-sulfoxide reductase heme-binding subunit MsrQ from Salmonella dublin (strain CT_02021853).